The sequence spans 419 residues: MNIIDELEWRGAIYQQTDEEGLRKWVEEKQISLYCGIDPSGDSMHIGHLIPFMILRRFQNAGHRPIILVGGATGTIGDPSGKKEERKLQSMEQISKNVESLRVQLGKIFDFEGDSAASMVNNYDWTKDVSILDFLRDYGKEFNVNTMLSKDIVASRLEVGISFTEFAYQILQAMDFNHLYEFNDCRLQIGGSDQWGNITAGLDLIRKKQGENAKAFGLTIPLLTKADGTKFGKSEGGAIWLNPEKTTPYEFYQFWINTDDRDVVKYLKYFTFLTEAEIDELAKQVEEEPHLRAAQKTLAAEMTKFVHSEEALEQALKISKALFSGDVTALTADEIEQGFKDVPTFVAEDAEVNLVDWLVTLGIEPSKRQAREDVTNGAIYINGERQQNVEKVIDASDRIENKFTIVRRGKKKYFLVSYK.

Y34 is an L-tyrosine binding site. The short motif at 39–48 (PSGDSMHIGH) is the 'HIGH' region element. L-tyrosine contacts are provided by Y168 and Q172. The 'KMSKS' region signature appears at 230–234 (KFGKS). K233 contacts ATP. An S4 RNA-binding domain is found at 352–418 (VNLVDWLVTL…GKKKYFLVSY (67 aa)).

This sequence belongs to the class-I aminoacyl-tRNA synthetase family. TyrS type 1 subfamily. In terms of assembly, homodimer.

The protein localises to the cytoplasm. It catalyses the reaction tRNA(Tyr) + L-tyrosine + ATP = L-tyrosyl-tRNA(Tyr) + AMP + diphosphate + H(+). Catalyzes the attachment of tyrosine to tRNA(Tyr) in a two-step reaction: tyrosine is first activated by ATP to form Tyr-AMP and then transferred to the acceptor end of tRNA(Tyr). This Listeria innocua serovar 6a (strain ATCC BAA-680 / CLIP 11262) protein is Tyrosine--tRNA ligase.